The following is an 84-amino-acid chain: Magnetosome protein MamR (84 aa).

This sequence belongs to the magnetosome MamR family.

The protein localises to the magnetosome. Functionally, may play a role in controlling magnetite number and size but not in control of magnetite morphology. This chain is Magnetosome protein MamR, found in Paramagnetospirillum magneticum (strain ATCC 700264 / AMB-1) (Magnetospirillum magneticum).